Here is a 183-residue protein sequence, read N- to C-terminus: Peptide deformylase (183 aa).

Fe cation contacts are provided by Cys111 and His154. Residue Glu155 is part of the active site. Fe cation is bound at residue His158.

Requires Fe(2+) as cofactor.

The catalysed reaction is N-terminal N-formyl-L-methionyl-[peptide] + H2O = N-terminal L-methionyl-[peptide] + formate. Functionally, removes the formyl group from the N-terminal Met of newly synthesized proteins. Requires at least a dipeptide for an efficient rate of reaction. N-terminal L-methionine is a prerequisite for activity but the enzyme has broad specificity at other positions. This chain is Peptide deformylase, found in Staphylococcus aureus.